The chain runs to 526 residues: Glucose-6-phosphate isomerase (526 aa).

Catalysis depends on glutamate 320, which acts as the Proton donor. Catalysis depends on residues histidine 349 and lysine 453.

The protein belongs to the GPI family.

The protein localises to the cytoplasm. It carries out the reaction alpha-D-glucose 6-phosphate = beta-D-fructose 6-phosphate. It functions in the pathway carbohydrate biosynthesis; gluconeogenesis. Its pathway is carbohydrate degradation; glycolysis; D-glyceraldehyde 3-phosphate and glycerone phosphate from D-glucose: step 2/4. Catalyzes the reversible isomerization of glucose-6-phosphate to fructose-6-phosphate. The polypeptide is Glucose-6-phosphate isomerase (Rippkaea orientalis (strain PCC 8801 / RF-1) (Cyanothece sp. (strain PCC 8801))).